The following is a 395-amino-acid chain: Digeranylgeranylglycerophospholipid reductase (395 aa).

Ala-15, Asp-34, Cys-45, Ala-46, Gly-48, Arg-97, Ala-121, Asp-276, and Gly-288 together coordinate FAD. The a 2,3-bis-O-(geranylgeranyl)-sn-glycerol 1-phospholipid site is built by Arg-329 and Gly-365.

The protein belongs to the geranylgeranyl reductase family. DGGGPL reductase subfamily. Requires FAD as cofactor.

The enzyme catalyses a 2,3-bis-O-phytanyl-sn-glycerol 1-phospholipid + 8 A = a 2,3-bis-O-(geranylgeranyl)-sn-glycerol 1-phospholipid + 8 AH2. It carries out the reaction 2,3-bis-O-(phytanyl)-sn-glycerol 1-phosphate + 8 A = 2,3-bis-O-(geranylgeranyl)-sn-glycerol 1-phosphate + 8 AH2. It catalyses the reaction CDP-2,3-bis-O-(geranylgeranyl)-sn-glycerol + 8 AH2 = CDP-2,3-bis-O-(phytanyl)-sn-glycerol + 8 A. The catalysed reaction is archaetidylserine + 8 AH2 = 2,3-bis-O-phytanyl-sn-glycero-3-phospho-L-serine + 8 A. The protein operates within membrane lipid metabolism; glycerophospholipid metabolism. Functionally, is involved in the reduction of 2,3-digeranylgeranylglycerophospholipids (unsaturated archaeols) into 2,3-diphytanylglycerophospholipids (saturated archaeols) in the biosynthesis of archaeal membrane lipids. Catalyzes the formation of archaetidic acid (2,3-di-O-phytanyl-sn-glyceryl phosphate) from 2,3-di-O-geranylgeranylglyceryl phosphate (DGGGP) via the hydrogenation of each double bond of the isoprenoid chains. Is also probably able to reduce double bonds of geranyl groups in CDP-2,3-bis-O-(geranylgeranyl)-sn-glycerol and archaetidylserine, thus acting at various stages in the biosynthesis of archaeal membrane lipids. The sequence is that of Digeranylgeranylglycerophospholipid reductase from Thermococcus gammatolerans (strain DSM 15229 / JCM 11827 / EJ3).